Here is a 232-residue protein sequence, read N- to C-terminus: Octanoyltransferase (232 aa).

The region spanning 44 to 219 (EYTADEIWVV…QLARQFGLVL (176 aa)) is the BPL/LPL catalytic domain. Substrate is bound by residues 83–90 (RGGQVTYH), 150–152 (ALG), and 163–165 (GLS). Cysteine 181 functions as the Acyl-thioester intermediate in the catalytic mechanism.

The protein belongs to the LipB family.

The protein localises to the cytoplasm. The enzyme catalyses octanoyl-[ACP] + L-lysyl-[protein] = N(6)-octanoyl-L-lysyl-[protein] + holo-[ACP] + H(+). It functions in the pathway protein modification; protein lipoylation via endogenous pathway; protein N(6)-(lipoyl)lysine from octanoyl-[acyl-carrier-protein]: step 1/2. Its function is as follows. Catalyzes the transfer of endogenously produced octanoic acid from octanoyl-acyl-carrier-protein onto the lipoyl domains of lipoate-dependent enzymes. Lipoyl-ACP can also act as a substrate although octanoyl-ACP is likely to be the physiological substrate. The chain is Octanoyltransferase from Xanthomonas axonopodis pv. citri (strain 306).